The sequence spans 560 residues: Protein DETOXIFICATION 45, chloroplastic (560 aa).

A chloroplast-targeting transit peptide spans 1–75 (MESSRVVVGG…QTNPDCGVVK (75 aa)). The next 12 membrane-spanning stretches (helical) occupy residues 109–129 (LVML…TLLM), 147–167 (VSMA…LSVA), 209–229 (ALVL…LASG), 250–270 (FLVL…LQGI), 280–300 (PVYC…LFIY), 308–328 (GAAI…LILL), 353–373 (FVLG…SMAA), 389–411 (VWLA…IASS), 426–446 (FVLK…GMSF), 466–486 (GVLF…FDGL), 495–515 (YAAC…LYAP), and 523–543 (VWVG…SRLM).

The protein belongs to the multi antimicrobial extrusion (MATE) (TC 2.A.66.1) family. Ubiquitous.

The protein localises to the plastid. It is found in the chloroplast membrane. This is Protein DETOXIFICATION 45, chloroplastic from Arabidopsis thaliana (Mouse-ear cress).